A 376-amino-acid chain; its full sequence is 23S rRNA (uracil(747)-C(5))-methyltransferase RlmC (376 aa).

[4Fe-4S] cluster is bound by residues C3, C11, C14, and C87. S-adenosyl-L-methionine contacts are provided by Q212, F241, E262, and N307. C334 serves as the catalytic Nucleophile.

Belongs to the class I-like SAM-binding methyltransferase superfamily. RNA M5U methyltransferase family. RlmC subfamily.

The catalysed reaction is uridine(747) in 23S rRNA + S-adenosyl-L-methionine = 5-methyluridine(747) in 23S rRNA + S-adenosyl-L-homocysteine + H(+). In terms of biological role, catalyzes the formation of 5-methyl-uridine at position 747 (m5U747) in 23S rRNA. The sequence is that of 23S rRNA (uracil(747)-C(5))-methyltransferase RlmC from Pectobacterium carotovorum subsp. carotovorum (strain PC1).